A 224-amino-acid polypeptide reads, in one-letter code: 7-cyano-7-deazaguanine synthase (224 aa).

10-20 provides a ligand contact to ATP; it reads LSGGLDSATVV. Cys-189, Cys-199, Cys-202, and Cys-205 together coordinate Zn(2+).

This sequence belongs to the QueC family. Zn(2+) serves as cofactor.

It carries out the reaction 7-carboxy-7-deazaguanine + NH4(+) + ATP = 7-cyano-7-deazaguanine + ADP + phosphate + H2O + H(+). The protein operates within purine metabolism; 7-cyano-7-deazaguanine biosynthesis. In terms of biological role, catalyzes the ATP-dependent conversion of 7-carboxy-7-deazaguanine (CDG) to 7-cyano-7-deazaguanine (preQ(0)). This is 7-cyano-7-deazaguanine synthase from Stutzerimonas stutzeri (strain A1501) (Pseudomonas stutzeri).